Reading from the N-terminus, the 318-residue chain is Ornithine carbamoyltransferase (318 aa).

Carbamoyl phosphate is bound by residues 63 to 66 (STRT), Q90, R114, and 141 to 144 (HPCQ). L-ornithine is bound by residues N172, D235, and 239-240 (SM). Residues 275-276 (CL) and R303 each bind carbamoyl phosphate.

This sequence belongs to the aspartate/ornithine carbamoyltransferase superfamily. OTCase family.

The protein resides in the cytoplasm. The catalysed reaction is carbamoyl phosphate + L-ornithine = L-citrulline + phosphate + H(+). It functions in the pathway amino-acid biosynthesis; L-arginine biosynthesis; L-arginine from L-ornithine and carbamoyl phosphate: step 1/3. Reversibly catalyzes the transfer of the carbamoyl group from carbamoyl phosphate (CP) to the N(epsilon) atom of ornithine (ORN) to produce L-citrulline. This is Ornithine carbamoyltransferase from Prochlorococcus marinus (strain SARG / CCMP1375 / SS120).